Consider the following 280-residue polypeptide: Large ribosomal subunit protein uL2 (280 aa).

Positions 229–280 (DHPHGGGEGKAPIGHPSPLTPWGKPTLGYKTRKKRKPSDRFIIQRANDKKEK) are disordered.

Belongs to the universal ribosomal protein uL2 family. As to quaternary structure, part of the 50S ribosomal subunit. Forms a bridge to the 30S subunit in the 70S ribosome.

Its function is as follows. One of the primary rRNA binding proteins. Required for association of the 30S and 50S subunits to form the 70S ribosome, for tRNA binding and peptide bond formation. It has been suggested to have peptidyltransferase activity; this is somewhat controversial. Makes several contacts with the 16S rRNA in the 70S ribosome. The protein is Large ribosomal subunit protein uL2 of Dictyoglomus turgidum (strain DSM 6724 / Z-1310).